The following is a 304-amino-acid chain: uncharacterized protein (304 aa).

The N-terminal stretch at 1 to 25 is a signal peptide; the sequence is MVKTAMLGAVALVIALGGTCGVADA. In terms of domain architecture, GP-PDE spans 34 to 303; the sequence is PMIVAHRAGT…DSPLAAQQWR (270 aa).

This is an uncharacterized protein from Mycobacterium tuberculosis (strain CDC 1551 / Oshkosh).